A 479-amino-acid polypeptide reads, in one-letter code: Glycogen synthase (479 aa).

Lysine 15 is an ADP-alpha-D-glucose binding site.

Belongs to the glycosyltransferase 1 family. Bacterial/plant glycogen synthase subfamily.

The enzyme catalyses [(1-&gt;4)-alpha-D-glucosyl](n) + ADP-alpha-D-glucose = [(1-&gt;4)-alpha-D-glucosyl](n+1) + ADP + H(+). Its pathway is glycan biosynthesis; glycogen biosynthesis. In terms of biological role, synthesizes alpha-1,4-glucan chains using ADP-glucose. The chain is Glycogen synthase from Histophilus somni (strain 129Pt) (Haemophilus somnus).